The sequence spans 583 residues: NEDD4-binding protein 2-like 2 (583 aa).

A coiled-coil region spans residues 162-197; the sequence is NSEKSEIDNELFQFYKEIEELEKEKDGFENSCKESE. Residues 549 to 575 are disordered; that stretch reads EPSHKSTQRPPPPQGRQRWGGSLGSHN.

This Homo sapiens (Human) protein is NEDD4-binding protein 2-like 2 (N4BP2L2).